A 531-amino-acid chain; its full sequence is tRNA(Ile)-lysidine synthase (531 aa).

32–37 is a binding site for ATP; that stretch reads SGGMDS.

It belongs to the tRNA(Ile)-lysidine synthase family.

It is found in the cytoplasm. The catalysed reaction is cytidine(34) in tRNA(Ile2) + L-lysine + ATP = lysidine(34) in tRNA(Ile2) + AMP + diphosphate + H(+). Its function is as follows. Ligates lysine onto the cytidine present at position 34 of the AUA codon-specific tRNA(Ile) that contains the anticodon CAU, in an ATP-dependent manner. Cytidine is converted to lysidine, thus changing the amino acid specificity of the tRNA from methionine to isoleucine. The chain is tRNA(Ile)-lysidine synthase from Blochmanniella floridana.